The chain runs to 368 residues: Isocitrate dehydrogenase [NAD] subunit 2, mitochondrial (368 aa).

Residues 1–14 (MFRQSIVKQSCRFL) constitute a mitochondrion transit peptide. Substrate is bound by residues Arg118, Arg128, Arg149, and Asp236. Residues Asp236, Asp262, and Asp266 each contribute to the Mg(2+) site.

The protein belongs to the isocitrate and isopropylmalate dehydrogenases family. In terms of assembly, octamer of two non-identical subunits IDH1 and IDH2. Mg(2+) serves as cofactor. It depends on Mn(2+) as a cofactor.

Its subcellular location is the mitochondrion. It carries out the reaction D-threo-isocitrate + NAD(+) = 2-oxoglutarate + CO2 + NADH. Performs an essential role in the oxidative function of the citric acid cycle. This Kluyveromyces lactis (strain ATCC 8585 / CBS 2359 / DSM 70799 / NBRC 1267 / NRRL Y-1140 / WM37) (Yeast) protein is Isocitrate dehydrogenase [NAD] subunit 2, mitochondrial (IDH2).